The sequence spans 96 residues: Putative translation initiation factor IF-1, chloroplastic (96 aa).

The region spanning isoleucine 18–histidine 57 is the S1-like domain.

This sequence belongs to the IF-1 family. Component of the 30S ribosomal translation pre-initiation complex which assembles on the 30S ribosome in the order IF-2 and IF-3, IF-1 and N-formylmethionyl-tRNA(fMet); mRNA recruitment can occur at any time during PIC assembly.

The protein localises to the plastid. It localises to the chloroplast. Functionally, one of the essential components for the initiation of protein synthesis. Stabilizes the binding of IF-2 and IF-3 on the 30S subunit to which N-formylmethionyl-tRNA(fMet) subsequently binds. Helps modulate mRNA selection, yielding the 30S pre-initiation complex (PIC). Upon addition of the 50S ribosomal subunit IF-1, IF-2 and IF-3 are released leaving the mature 70S translation initiation complex. This Nicotiana tabacum (Common tobacco) protein is Putative translation initiation factor IF-1, chloroplastic (infA).